A 760-amino-acid polypeptide reads, in one-letter code: Prolyl endopeptidase FAP (760 aa).

Over 1-4 (MKTW) the chain is Cytoplasmic. Residues 5-25 (VKIVFGVATSAVLALLVMCIV) form a helical; Signal-anchor for type II membrane protein membrane-spanning segment. The Extracellular portion of the chain corresponds to 26-760 (LRPSRVHNSE…FLKQCFSLSD (735 aa)). N-linked (GlcNAc...) asparagine glycans are attached at residues asparagine 49, asparagine 92, and asparagine 99. Glutamate 203 and glutamate 204 together coordinate substrate. Residues asparagine 227 and asparagine 314 are each glycosylated (N-linked (GlcNAc...) asparagine). Disulfide bonds link cysteine 321–cysteine 332, cysteine 438–cysteine 441, and cysteine 448–cysteine 466. Serine 624 (charge relay system) is an active-site residue. A disulfide bridge links cysteine 643 with cysteine 755. The N-linked (GlcNAc...) asparagine glycan is linked to asparagine 679. Active-site charge relay system residues include aspartate 702 and histidine 734.

It belongs to the peptidase S9B family. Homodimer; homodimerization is required for activity of both plasma membrane and soluble forms. The monomer is inactive. Heterodimer with DPP4. Interacts with PLAUR; the interaction occurs at the cell surface of invadopodia membranes. Interacts with ITGB1. Interacts with ITGA3. Associates with integrin alpha-3/beta-1; the association occurs in a collagen-dependent manner at the cell surface of invadopodia membranes. Post-translationally, N-glycosylated. The N-terminus may be blocked. In terms of tissue distribution, expressed in adipose tissue. Expressed in the dermal fibroblasts in the fetal skin. Expressed in the granulation tissue of healing wounds and on reactive stromal fibroblast in epithelial cancers. Expressed in activated fibroblast-like synoviocytes from inflamed synovial tissues. Expressed in activated hepatic stellate cells (HSC) and myofibroblasts from cirrhotic liver, but not detected in normal liver. Expressed in glioma cells (at protein level). Expressed in glioblastomas and glioma cells. Isoform 1 and isoform 2 are expressed in melanoma, carcinoma and fibroblast cell lines.

The protein localises to the cell surface. Its subcellular location is the cell membrane. It is found in the cell projection. It localises to the lamellipodium membrane. The protein resides in the invadopodium membrane. The protein localises to the ruffle membrane. Its subcellular location is the membrane. It is found in the secreted. It localises to the cytoplasm. The catalysed reaction is Hydrolysis of Pro-|-Xaa &gt;&gt; Ala-|-Xaa in oligopeptides.. The enzyme catalyses Release of an N-terminal dipeptide, Xaa-Yaa-|-Zaa-, from a polypeptide, preferentially when Yaa is Pro, provided Zaa is neither Pro nor hydroxyproline.. Gelatinase activity is inhibited by serine-protease inhibitors, such as phenylmethylsulfonyl fluoride (PMSF), 4-(2-aminoethyl)-benzenesulfonyl fluoride hydrochloride (AEBSF), 4-amidino phenylsulfonyl fluoride (APSF) and diisopropyl fluorophosphate (DFP), N-ethylmaleimide (NEM) and phenylmethylsulfonyl fluoride (PMSF). Dipeptidyl peptidase activity is inhibited by 2,2'-azino-bis(3-ethylbenzthiazoline-6-sulfonic acid), diisopropylfluorophosphate (DFP). Prolyl endopeptidase activity is inhibited by the boronic acid peptide Ac-Gly-BoroPro, Ac-Gly-Pro-chloromethyl ketone and Thr-Ser-Gly-chloromethyl ketone. Functionally, cell surface glycoprotein serine protease that participates in extracellular matrix degradation and involved in many cellular processes including tissue remodeling, fibrosis, wound healing, inflammation and tumor growth. Both plasma membrane and soluble forms exhibit post-proline cleaving endopeptidase activity, with a marked preference for Ala/Ser-Gly-Pro-Ser/Asn/Ala consensus sequences, on substrate such as alpha-2-antiplasmin SERPINF2 and SPRY2. Degrade also gelatin, heat-denatured type I collagen, but not native collagen type I and IV, vitronectin, tenascin, laminin, fibronectin, fibrin or casein. Also has dipeptidyl peptidase activity, exhibiting the ability to hydrolyze the prolyl bond two residues from the N-terminus of synthetic dipeptide substrates provided that the penultimate residue is proline, with a preference for Ala-Pro, Ile-Pro, Gly-Pro, Arg-Pro and Pro-Pro. Natural neuropeptide hormones for dipeptidyl peptidase are the neuropeptide Y (NPY), peptide YY (PYY), substance P (TAC1) and brain natriuretic peptide 32 (NPPB). The plasma membrane form, in association with either DPP4, PLAUR or integrins, is involved in the pericellular proteolysis of the extracellular matrix (ECM), and hence promotes cell adhesion, migration and invasion through the ECM. Plays a role in tissue remodeling during development and wound healing. Participates in the cell invasiveness towards the ECM in malignant melanoma cancers. Enhances tumor growth progression by increasing angiogenesis, collagen fiber degradation and apoptosis and by reducing antitumor response of the immune system. Promotes glioma cell invasion through the brain parenchyma by degrading the proteoglycan brevican. Acts as a tumor suppressor in melanocytic cells through regulation of cell proliferation and survival in a serine protease activity-independent manner. This is Prolyl endopeptidase FAP from Homo sapiens (Human).